The primary structure comprises 265 residues: Early E4 31 kDa protein (265 aa).

The protein belongs to the adenoviridae E4 30 to 34 kDa protein family. Interacts with E1B-55k.

It is found in the host nucleus. The protein resides in the host cytoplasm. In terms of biological role, plays a major role to prevent cellular inhibition of viral genome replication by nuclear bodies. Assembles an SCF-like E3 ubiquitin ligase complex based on the cellular proteins ELOB, ELOC, CUL5 and RBX1, in cooperation with viral E1B-55K. This viral RING-type ligase ubiquitinates cellular substrates prior to proteasomal degradation: p53/TP53, LIG4, MRE11-RAD50-NBS1 (MRN) complex, ITGA3, DAXX and BLM. The protein is Early E4 31 kDa protein of Canis lupus familiaris (Dog).